The chain runs to 440 residues: Proline--tRNA ligase (440 aa).

Belongs to the class-II aminoacyl-tRNA synthetase family. ProS type 2 subfamily. Homodimer.

It localises to the cytoplasm. The catalysed reaction is tRNA(Pro) + L-proline + ATP = L-prolyl-tRNA(Pro) + AMP + diphosphate. Functionally, catalyzes the attachment of proline to tRNA(Pro) in a two-step reaction: proline is first activated by ATP to form Pro-AMP and then transferred to the acceptor end of tRNA(Pro). This Rhizobium leguminosarum bv. trifolii (strain WSM2304) protein is Proline--tRNA ligase.